We begin with the raw amino-acid sequence, 69 residues long: DNA gyrase inhibitor YacG (69 aa).

A disordered region spans residues 1–28 (MSGEGKKHGSNVEPLRPTRPCPECGRPS). Cysteine 21, cysteine 24, cysteine 36, and cysteine 40 together coordinate Zn(2+).

This sequence belongs to the DNA gyrase inhibitor YacG family. In terms of assembly, interacts with GyrB. The cofactor is Zn(2+).

Inhibits all the catalytic activities of DNA gyrase by preventing its interaction with DNA. Acts by binding directly to the C-terminal domain of GyrB, which probably disrupts DNA binding by the gyrase. The chain is DNA gyrase inhibitor YacG from Sinorhizobium fredii (strain NBRC 101917 / NGR234).